The following is a 336-amino-acid chain: MLQSLAGSSCVRLVERHRSAWCFGFLVLGYLLYLVFGAVVFSSVELPYEDLLRQELRKLKRRFLEEHECLSEPQLEQFLGRVLEASNYGVSVLSNASGNWNWDFTSALFFASTVLSTTGYGHTVPLSDGGKAFCIIYSVIGIPFTLLFLTAVVQRVTVHVTRRPVLYFHIRWGFSKQVVAIVHAVLLGFVTVSCFFFIPAAVFSVLEDDWNFLESFYFCFISLSTIGLGDYVPGEGYNQKFRELYKIGITCYLLLGLIAMLVVLETFCELHELKKFRKMFYVKKDKDEDLVHIMEHDQLSFSSVTEQVAGLKEEQKQSEPFVASQSPPYEDGSADH.

Over 1 to 20 the chain is Cytoplasmic; that stretch reads MLQSLAGSSCVRLVERHRSA. Residues 21 to 41 form a helical membrane-spanning segment; that stretch reads WCFGFLVLGYLLYLVFGAVVF. At 42 to 103 the chain is on the extracellular side; that stretch reads SSVELPYEDL…SNASGNWNWD (62 aa). N-linked (GlcNAc...) asparagine glycosylation occurs at Asn-95. The segment at residues 104–116 is an intramembrane region (helical); sequence FTSALFFASTVLS. The stretch at 117 to 122 is an intramembrane region; it reads TTGYGH. The segment at 117–122 is selectivity filter 1; that stretch reads TTGYGH. The Extracellular portion of the chain corresponds to 123–132; the sequence is TVPLSDGGKA. Residues 133–156 form a helical membrane-spanning segment; it reads FCIIYSVIGIPFTLLFLTAVVQRV. The Cytoplasmic portion of the chain corresponds to 157–181; that stretch reads TVHVTRRPVLYFHIRWGFSKQVVAI. Residues 182-202 form a helical membrane-spanning segment; sequence VHAVLLGFVTVSCFFFIPAAV. Topologically, residues 203–211 are extracellular; the sequence is FSVLEDDWN. Positions 212-224 form an intramembrane region, helical; that stretch reads FLESFYFCFISLS. The tract at residues 225–230 is selectivity filter 2; it reads TIGLGD. Residues 225–231 lie within the membrane without spanning it; sequence TIGLGDY. Residues 232-243 are Extracellular-facing; that stretch reads VPGEGYNQKFRE. A helical membrane pass occupies residues 244-267; that stretch reads LYKIGITCYLLLGLIAMLVVLETF. Topologically, residues 268 to 336 are cytoplasmic; it reads CELHELKKFR…PPYEDGSADH (69 aa). Lys-274 participates in a covalent cross-link: Glycyl lysine isopeptide (Lys-Gly) (interchain with G-Cter in SUMO). Positions 293–299 are important for intracellular retention in recycling endosomes; sequence IMEHDQL. Residues 310-336 form a disordered region; sequence GLKEEQKQSEPFVASQSPPYEDGSADH. A Phosphoserine modification is found at Ser-326.

This sequence belongs to the two pore domain potassium channel (TC 1.A.1.8) family. Homodimer; disulfide-linked. Heterodimer with KCNK2; disulfide-linked. In astrocytes, forms mostly heterodimeric potassium channels with KCNK2, with only a minor proportion of functional channels containing homodimeric KCNK1. Interacts with KCNK3 and KCNK9, forming functional heterodimeric channels. Interacts with GNG4. Identified in a complex with PSD and ARF6; interacts only with PSD that is bound to ARF6. Interacts with UBE2I. In terms of processing, sumoylation is controversial. Sumoylated by UBE2I. Not sumoylated when expressed in xenopus oocytes or mammalian cells. Sumoylation inactivates the channel, but does not interfere with expression at the cell membrane. Sumoylation of a single subunit is sufficient to silence the dimeric channel. Sumoylation of KCNK1 is sufficient to silence heterodimeric channels formed by KCNK1 and KCNK3 or KCNK9. Desumoylated by SENP1; this activates the channel. Desumoylated by SENP1; this strongly increases halothane-mediated activation of heterodimeric channels formed with KCNK9. SENP1 treatment has no effect. As to expression, detected in spiral ganglion neurons. Detected in hippocampus CA1 and CA1 regions and in the molecular layer of the dentate gyrus. Detected on hippocampus astrocytes. Highly expressed in the stria vascularis in the cochlea. Detected in pancreas islet beta cells. Detected in kidney, at brush border membranes in proximal tubules and in cytoplasmic structures in distal convoluted tubules, thick ascending limbs and collecting ducts (at protein level). Widely expressed. Detected in spiral ganglion cells. Highest expression in brain, kidney, thyroid, salivary gland, adrenal gland, prostate, epididymis, uterus, placenta, colon and jejunum. Moderate expression in eyes, pituitary, pancreas, smooth muscle, testis and ovary. Very low levels in lung, aorta, liver, heart, skeletal muscle, thymus and spleen. In the brain, highest expression in cerebellar granule cells, brainstem, hippocampus and cerebral cortex.

Its subcellular location is the cell membrane. It localises to the recycling endosome. The protein resides in the apical cell membrane. It is found in the cytoplasmic vesicle. The protein localises to the perikaryon. Its subcellular location is the cell projection. It localises to the dendrite. The protein resides in the synaptic cell membrane. It catalyses the reaction K(+)(in) = K(+)(out). The catalysed reaction is NH4(+)(in) = NH4(+)(out). It carries out the reaction Na(+)(in) = Na(+)(out). The enzyme catalyses Rb(+)(in) = Rb(+)(out). It catalyses the reaction Cs(+)(in) = Cs(+)(out). The catalysed reaction is Li(+)(in) = Li(+)(out). It carries out the reaction L-glutamate(out) = L-glutamate(in). The enzyme catalyses chloride(in) = chloride(out). With respect to regulation, inhibited by quinine, quinidine, barium, and internal acidification. In terms of biological role, ion channel that contributes to passive transmembrane potassium transport and to the regulation of the resting membrane potential in brain astrocytes, but also in kidney and in other tissues. Forms dimeric channels through which potassium ions pass in accordance with their electrochemical gradient. The channel is selective for K(+) ions at physiological potassium concentrations and at neutral pH, but becomes permeable to Na(+) at subphysiological K(+) levels and upon acidification of the extracellular medium. The homodimer has very low potassium channel activity, when expressed in heterologous systems, and can function as weakly inward rectifying potassium channel. Channel activity is modulated by activation of serotonin receptors. Heterodimeric channels containing KCNK1 and KCNK2 have much higher activity, and may represent the predominant form in astrocytes. Heterodimeric channels containing KCNK1 and KCNK3 or KCNK9 have much higher activity. Heterodimeric channels formed by KCNK1 and KCNK9 may contribute to halothane-sensitive currents. Mediates outward rectifying potassium currents in dentate gyrus granule cells and contributes to the regulation of their resting membrane potential. Contributes to the regulation of action potential firing in dentate gyrus granule cells and down-regulates their intrinsic excitability. In astrocytes, the heterodimer formed by KCNK1 and KCNK2 is required for rapid glutamate release in response to activation of G-protein coupled receptors, such as F2R and CNR1. Required for normal ion and water transport in the kidney. Contributes to the regulation of the resting membrane potential of pancreatic beta cells. The low channel activity of homodimeric KCNK1 may be due to sumoylation. The low channel activity may be due to rapid internalization from the cell membrane and retention in recycling endosomes. Permeable to monovalent cations with ion selectivity for K(+) &gt; Rb(+) &gt;&gt; NH4(+) &gt;&gt; Cs(+) = Na(+) = Li(+). In Mus musculus (Mouse), this protein is Potassium channel subfamily K member 1 (Kcnk1).